We begin with the raw amino-acid sequence, 611 residues long: E-selectin (611 aa).

The signal sequence occupies residues 1-22 (MITSQLLPALTLVLLLFKEGGA). The 118-residue stretch at 23-140 (WSYNASTEAM…CDKKKLALCY (118 aa)) folds into the C-type lectin domain. Residues 23 to 557 (WSYNASTEAM…CEAPTESSIP (535 aa)) are Extracellular-facing. N-linked (GlcNAc...) asparagine glycosylation is present at N26. Intrachain disulfides connect C41–C139, C112–C131, C144–C155, C149–C164, C166–C175, C181–C225, C194–C207, C211–C238, C243–C287, C256–C269, C273–C300, C305–C350, C336–C363, C368–C413, C399–C426, C431–C476, C462–C489, C494–C535, and C521–C548. E102, N104, and E110 together coordinate Ca(2+). A carbohydrate-binding positions include 102-110 (EPNNKQNDE), 114-119 (EIYIKR), and 127-129 (NDE). Residues N127 and D128 each contribute to the Ca(2+) site. The EGF-like domain maps to 141–176 (TAACTPTSCSGHGECVETVNNYTCKCHPGFRGLRCE). N161 carries an N-linked (GlcNAc...) asparagine glycan. Sushi domains follow at residues 179 to 240 (VTCQ…ACNV) and 241 to 302 (VECS…TCKA). N204 carries N-linked (GlcNAc...) asparagine glycosylation. An N-linked (GlcNAc...) asparagine glycan is attached at N266. 2 N-linked (GlcNAc...) asparagine glycosylation sites follow: N313 and N333. Sushi domains lie at 316–365 (VSCS…VCKA), 367–428 (QCKA…TCEA), 430–491 (KCDA…SCQV), and 492–550 (VQCF…TCEA). N528 is a glycosylation site (N-linked (GlcNAc...) asparagine). A helical transmembrane segment spans residues 558-579 (LAVGLTAGGTSLLTVASFLLWL). Residues 580–611 (LKRLRKRAKKFVPASSCQSLQSDGSYHMPCSI) are Cytoplasmic-facing.

The protein belongs to the selectin/LECAM family. As to quaternary structure, interacts with SELPLG/PSGL1 and PODXL2 through the sialyl Lewis X epitope. SELPLG sulfation appears not to be required for this interaction.

The protein localises to the cell membrane. In terms of biological role, cell-surface glycoprotein having a role in immunoadhesion. Mediates in the adhesion of blood neutrophils in cytokine-activated endothelium through interaction with SELPLG/PSGL1. May have a role in capillary morphogenesis. The polypeptide is E-selectin (SELE) (Canis lupus familiaris (Dog)).